Consider the following 274-residue polypeptide: GCGGNGLVLSATDSRACRKVAVKKIVLSDARSMKHALREIKIIRRLDHDNIVKVYEVLGPKGSDLQGELFKFSVAYIVQEYMETDLACLLEQGTLTEEHAKLFMYQLLRGLKYIHSANVLHRDLKPANIFISTEDLVLKIGDFGLARIADQHYSHKGYLSEGLVTKWYRSPRLLLSPNNYTKAIDMWAAGCILAEMLTGKMLFAGAHELEQMQLILDTIPVVREEDKEELLRVMPSFVSSTWEVKRPLRKLLPDVNREAIDFLEKILTFSPMDR.

Residues 1–8 (GCGGNGLV) and Lys23 contribute to the ATP site. Positions 1 to 274 (GCGGNGLVLS…KILTFSPMDR (274 aa)) constitute a Protein kinase domain. Asp123 serves as the catalytic Proton acceptor. Ser160 bears the Phosphoserine mark. Residues 160–162 (SEG) carry the SEG motif motif.

The protein belongs to the protein kinase superfamily. CMGC Ser/Thr protein kinase family. MAP kinase subfamily. As to quaternary structure, homodimer. Heterodimer with ERK3/MAPK6. Interacts with MAPKAPK5. Mg(2+) is required as a cofactor. Post-translationally, phosphorylated by PAK1, PAK2 and PAK3 in the activation loop resulting in catalytic activation. Phosphorylated by MAPKAPK5 at other sites. In terms of tissue distribution, exclusively detected in the brain, where expression is restricted to the choroid plexus and hippocampus, and to a lesser extent in lung.

It is found in the cytoplasm. It localises to the nucleus. The catalysed reaction is L-seryl-[protein] + ATP = O-phospho-L-seryl-[protein] + ADP + H(+). It catalyses the reaction L-threonyl-[protein] + ATP = O-phospho-L-threonyl-[protein] + ADP + H(+). Activated by phosphorylation in the activation loop. Functionally, atypical MAPK protein. Phosphorylates microtubule-associated protein 2 (MAP2) and MAPKAPK5. The precise role of the complex formed with MAPKAPK5 is still unclear, but the complex follows a complex set of phosphorylation events: upon interaction with atypical MAPKAPK5, ERK4/MAPK4 is phosphorylated and then mediates phosphorylation and activation of MAPKAPK5, which in turn phosphorylates ERK4/MAPK4. May promote entry in the cell cycle. This chain is Mitogen-activated protein kinase 4 (Mapk4), found in Rattus norvegicus (Rat).